The following is a 338-amino-acid chain: Aspartate carbamoyltransferase catalytic subunit (338 aa).

Positions 59 and 60 each coordinate carbamoyl phosphate. Lys87 serves as a coordination point for L-aspartate. Carbamoyl phosphate contacts are provided by Arg109, His142, and Gln145. The L-aspartate site is built by Arg182 and Arg253. Carbamoyl phosphate contacts are provided by Gly294 and Pro295.

Belongs to the aspartate/ornithine carbamoyltransferase superfamily. ATCase family. In terms of assembly, heterododecamer (2C3:3R2) of six catalytic PyrB chains organized as two trimers (C3), and six regulatory PyrI chains organized as three dimers (R2).

It carries out the reaction carbamoyl phosphate + L-aspartate = N-carbamoyl-L-aspartate + phosphate + H(+). The protein operates within pyrimidine metabolism; UMP biosynthesis via de novo pathway; (S)-dihydroorotate from bicarbonate: step 2/3. In terms of biological role, catalyzes the condensation of carbamoyl phosphate and aspartate to form carbamoyl aspartate and inorganic phosphate, the committed step in the de novo pyrimidine nucleotide biosynthesis pathway. The polypeptide is Aspartate carbamoyltransferase catalytic subunit (Prochlorococcus marinus (strain SARG / CCMP1375 / SS120)).